The following is a 288-amino-acid chain: MTDYTPQQIVARGARADAEAAADAIDNHPGLEGATYSILEEDEDKGLWRIDAFPTTDEEDAGLLEVLAGYPLKVVRETLADADWLAMALSGLPPVRAGRFFVYGMHDRGRLPASTVNLRIEAGAAFGTGHHGTTVGCLMAYDKLIKARKFKKVLDVGAGTGLLAIAAARTGSRIAVGTDIDRPSVRISKENAKVNRANAKFVHASGLGHRLVTDNAPYDLVFANILARPLISLAQDIKTALVPGGTVILSGLLRTQERMVKAAYVSRGFKVVNRIHRDAWAALVLQRP.

Positions 134, 157, 179, and 224 each coordinate S-adenosyl-L-methionine.

This sequence belongs to the methyltransferase superfamily. PrmA family.

It localises to the cytoplasm. The catalysed reaction is L-lysyl-[protein] + 3 S-adenosyl-L-methionine = N(6),N(6),N(6)-trimethyl-L-lysyl-[protein] + 3 S-adenosyl-L-homocysteine + 3 H(+). Methylates ribosomal protein L11. This chain is Ribosomal protein L11 methyltransferase, found in Caulobacter sp. (strain K31).